A 484-amino-acid polypeptide reads, in one-letter code: Folate synthesis bifunctional protein (484 aa).

Residues 15 to 141 (VIALGSNVGN…PFVLAPLVDL (127 aa)) form an HPPK region. The region spanning 202-470 (TYVMGILNLT…NVRDNVDAAR (269 aa)) is the Pterin-binding domain. Positions 204–484 (VMGILNLTPD…MMTKRFKNVD (281 aa)) are DHPS. A Mg(2+)-binding site is contributed by Asn-209. (7,8-dihydropterin-6-yl)methyl diphosphate is bound by residues Thr-249, Asp-286, Asn-305, Asp-378, Lys-423, and 458-460 (RVH).

This sequence in the N-terminal section; belongs to the HPPK family. It in the C-terminal section; belongs to the DHPS family. Mg(2+) serves as cofactor. As to expression, expressed exclusively in reproductive tissues.

It is found in the cytoplasm. The protein localises to the cytosol. The enzyme catalyses 6-hydroxymethyl-7,8-dihydropterin + ATP = (7,8-dihydropterin-6-yl)methyl diphosphate + AMP + H(+). It catalyses the reaction (7,8-dihydropterin-6-yl)methyl diphosphate + 4-aminobenzoate = 7,8-dihydropteroate + diphosphate. It functions in the pathway cofactor biosynthesis; tetrahydrofolate biosynthesis; 2-amino-4-hydroxy-6-hydroxymethyl-7,8-dihydropteridine diphosphate from 7,8-dihydroneopterin triphosphate: step 4/4. Its pathway is cofactor biosynthesis; tetrahydrofolate biosynthesis; 7,8-dihydrofolate from 2-amino-4-hydroxy-6-hydroxymethyl-7,8-dihydropteridine diphosphate and 4-aminobenzoate: step 1/2. With respect to regulation, inhibited by sulfanilamide. Catalyzes the first two consecutive steps of tetrahydrofolate biosynthesis. Plays a role in seed stress response and survival. The protein is Folate synthesis bifunctional protein of Arabidopsis thaliana (Mouse-ear cress).